A 1454-amino-acid polypeptide reads, in one-letter code: Beta-1,3-glucan-binding protein (1454 aa).

A propeptide spanning residues 1–197 (MSFDLTTPFD…KRSLEMRMMN (197 aa)) is cleaved from the precursor. N-linked (GlcNAc...) asparagine glycans are attached at residues N33, N55, N185, N571, N592, N825, N882, and N1153.

Belongs to the glycosyl hydrolase 16 family. In terms of assembly, monomer. In terms of tissue distribution, expressed in the hepatopancreas and secreted into the hemolymph. Expressed at lower levels in muscle, pleopod and gill tissue.

It is found in the secreted. Involved in the recognition of invading microorganisms. Binds specifically to beta-1,3-glucan and activates the prophenoloxidase cascade. The polypeptide is Beta-1,3-glucan-binding protein (Penaeus vannamei (Whiteleg shrimp)).